A 164-amino-acid chain; its full sequence is RNA pyrophosphohydrolase (164 aa).

A Nudix hydrolase domain is found at 8–153; that stretch reads PYRSNVGAAL…KRPIYERLAR (146 aa). The short motif at 45–66 is the Nudix box element; sequence GGIDGDEDPAAAVLRELDEEIG.

Belongs to the Nudix hydrolase family. RppH subfamily. Requires a divalent metal cation as cofactor.

Accelerates the degradation of transcripts by removing pyrophosphate from the 5'-end of triphosphorylated RNA, leading to a more labile monophosphorylated state that can stimulate subsequent ribonuclease cleavage. The chain is RNA pyrophosphohydrolase from Acidiphilium cryptum (strain JF-5).